The following is a 298-amino-acid chain: Pyridoxal 5'-phosphate synthase subunit PdxS (298 aa).

Asp24 is a D-ribose 5-phosphate binding site. Lys81 acts as the Schiff-base intermediate with D-ribose 5-phosphate in catalysis. Gly153 provides a ligand contact to D-ribose 5-phosphate. Arg165 contacts D-glyceraldehyde 3-phosphate. Residues Gly214 and 235–236 (GS) each bind D-ribose 5-phosphate.

It belongs to the PdxS/SNZ family. As to quaternary structure, in the presence of PdxT, forms a dodecamer of heterodimers.

The catalysed reaction is aldehydo-D-ribose 5-phosphate + D-glyceraldehyde 3-phosphate + L-glutamine = pyridoxal 5'-phosphate + L-glutamate + phosphate + 3 H2O + H(+). It participates in cofactor biosynthesis; pyridoxal 5'-phosphate biosynthesis. In terms of biological role, catalyzes the formation of pyridoxal 5'-phosphate from ribose 5-phosphate (RBP), glyceraldehyde 3-phosphate (G3P) and ammonia. The ammonia is provided by the PdxT subunit. Can also use ribulose 5-phosphate and dihydroxyacetone phosphate as substrates, resulting from enzyme-catalyzed isomerization of RBP and G3P, respectively. In Halalkalibacterium halodurans (strain ATCC BAA-125 / DSM 18197 / FERM 7344 / JCM 9153 / C-125) (Bacillus halodurans), this protein is Pyridoxal 5'-phosphate synthase subunit PdxS.